A 205-amino-acid polypeptide reads, in one-letter code: Putative 3-methyladenine DNA glycosylase (205 aa).

The protein belongs to the DNA glycosylase MPG family.

This is Putative 3-methyladenine DNA glycosylase from Bacillus anthracis (strain A0248).